The chain runs to 65 residues: Large ribosomal subunit protein bL35 (65 aa).

This sequence belongs to the bacterial ribosomal protein bL35 family.

The polypeptide is Large ribosomal subunit protein bL35 (Photorhabdus laumondii subsp. laumondii (strain DSM 15139 / CIP 105565 / TT01) (Photorhabdus luminescens subsp. laumondii)).